We begin with the raw amino-acid sequence, 516 residues long: Glucose-6-phosphate 1-dehydrogenase 5, cytoplasmic (516 aa).

NADP(+) contacts are provided by residues 38–45 (GASGDLAK), Arg73, Tyr156, and Lys183. Residues Lys183, 213–217 (HYLGK), Glu251, and Asp270 each bind D-glucose 6-phosphate. The active-site Proton acceptor is the His275. An NADP(+)-binding site is contributed by Lys358. Positions 361 and 366 each coordinate D-glucose 6-phosphate. The NADP(+) site is built by Lys367, Arg371, and Arg395. Residue Gln397 coordinates D-glucose 6-phosphate. Residues 403 to 405 (YMK), 423 to 425 (DLS), Arg489, and Trp511 contribute to the NADP(+) site.

The protein belongs to the glucose-6-phosphate dehydrogenase family. In terms of assembly, forms homodimer. As to expression, expressed in leaves and stems.

The protein resides in the cytoplasm. It is found in the cytosol. It carries out the reaction D-glucose 6-phosphate + NADP(+) = 6-phospho-D-glucono-1,5-lactone + NADPH + H(+). The protein operates within carbohydrate degradation; pentose phosphate pathway; D-ribulose 5-phosphate from D-glucose 6-phosphate (oxidative stage): step 1/3. Regulated by metabolites. Functionally, catalyzes the rate-limiting step of the oxidative pentose-phosphate pathway, which represents a route for the dissimilation of carbohydrates besides glycolysis. The main function of this enzyme is to provide reducing power (NADPH) and pentose phosphates for fatty acid and nucleic acid synthesis which are involved in membrane synthesis and cell division. In Arabidopsis thaliana (Mouse-ear cress), this protein is Glucose-6-phosphate 1-dehydrogenase 5, cytoplasmic.